The sequence spans 294 residues: Proline iminopeptidase (294 aa).

The AB hydrolase-1 domain occupies 28-278 (PLLLLHGGPG…GCGHMPFVQE (251 aa)). Catalysis depends on S106, which acts as the Nucleophile. D245 is an active-site residue. Catalysis depends on H272, which acts as the Proton donor.

Belongs to the peptidase S33 family. Homotrimer.

Its subcellular location is the cell envelope. The catalysed reaction is Release of N-terminal proline from a peptide.. Its activity is regulated as follows. Inhibited by 3,4-DCI, but no significant effect on enzyme activity by pepstatin A, E-64, 1,10-phenanthroline or EDTA. In terms of biological role, releases the N-terminal proline from various substrates. Cleaves Pro-betaNA (L-prolyl-beta-naphthylamide) effectively. The protein is Proline iminopeptidase (pip) of Lactobacillus delbrueckii subsp. lactis.